The chain runs to 239 residues: ATP synthase subunit a (239 aa).

5 helical membrane passes run 17–37 (GTVCMMVLLTCLIVFFLVYFF), 75–95 (FHLLAFTLFLFVFVANNIGLI), 113–133 (DPFVTLTLAFIMITLTHLFGV), 182–202 (LLTLIANMMNNLGWFSLPLAI), and 206–226 (MVWIAFSLFIGSIQAFVFVTL).

It belongs to the ATPase A chain family. F-type ATPases have 2 components, CF(1) - the catalytic core - and CF(0) - the membrane proton channel. CF(1) has five subunits: alpha(3), beta(3), gamma(1), delta(1), epsilon(1). CF(0) has three main subunits: a(1), b(2) and c(9-12). The alpha and beta chains form an alternating ring which encloses part of the gamma chain. CF(1) is attached to CF(0) by a central stalk formed by the gamma and epsilon chains, while a peripheral stalk is formed by the delta and b chains.

It localises to the cell membrane. Its function is as follows. Key component of the proton channel; it plays a direct role in the translocation of protons across the membrane. The sequence is that of ATP synthase subunit a from Enterococcus hirae (strain ATCC 9790 / DSM 20160 / JCM 8729 / LMG 6399 / NBRC 3181 / NCIMB 6459 / NCDO 1258 / NCTC 12367 / WDCM 00089 / R).